We begin with the raw amino-acid sequence, 886 residues long: Alanine--tRNA ligase (886 aa).

Zn(2+)-binding residues include H564, H568, C676, and H680.

It belongs to the class-II aminoacyl-tRNA synthetase family. The cofactor is Zn(2+).

The protein localises to the cytoplasm. It carries out the reaction tRNA(Ala) + L-alanine + ATP = L-alanyl-tRNA(Ala) + AMP + diphosphate. Functionally, catalyzes the attachment of alanine to tRNA(Ala) in a two-step reaction: alanine is first activated by ATP to form Ala-AMP and then transferred to the acceptor end of tRNA(Ala). Also edits incorrectly charged Ser-tRNA(Ala) and Gly-tRNA(Ala) via its editing domain. The chain is Alanine--tRNA ligase from Methylobacterium sp. (strain 4-46).